Here is a 216-residue protein sequence, read N- to C-terminus: Putative germin-like protein 2-1 (216 aa).

An N-terminal signal peptide occupies residues 1–21 (MASTWFFLLALLAVSISNAFA). A disulfide bond links cysteine 31 and cysteine 46. Positions 60–210 (SGLHMAGNTS…AFQVEKKIVD (151 aa)) constitute a Cupin type-1 domain. Asparagine 67 carries an N-linked (GlcNAc...) asparagine glycan. Mn(2+) is bound by residues histidine 108, histidine 110, glutamate 115, and histidine 156.

The protein belongs to the germin family. In terms of assembly, oligomer (believed to be a pentamer but probably hexamer).

The protein localises to the secreted. It is found in the extracellular space. Its subcellular location is the apoplast. May play a role in plant defense. Probably has no oxalate oxidase activity even if the active site is conserved. This chain is Putative germin-like protein 2-1, found in Oryza sativa subsp. japonica (Rice).